Here is a 597-residue protein sequence, read N- to C-terminus: Arginine--tRNA ligase (597 aa).

A 'HIGH' region motif is present at residues 125-135 (PNTNKPLHLGH).

Belongs to the class-I aminoacyl-tRNA synthetase family. Monomer.

The protein localises to the cytoplasm. The enzyme catalyses tRNA(Arg) + L-arginine + ATP = L-arginyl-tRNA(Arg) + AMP + diphosphate. The chain is Arginine--tRNA ligase from Porphyromonas gingivalis (strain ATCC BAA-308 / W83).